Consider the following 181-residue polypeptide: ADP-ribosylation factor 1 (181 aa).

The N-myristoyl glycine moiety is linked to residue Gly-2. GTP-binding positions include 24–31 (GLDAAGKT), 67–71 (DVGGQ), and 126–129 (NKQD).

The protein belongs to the small GTPase superfamily. Arf family. As to expression, seedling shoots.

The protein resides in the golgi apparatus. It carries out the reaction GTP + H2O = GDP + phosphate + H(+). Functionally, GTP-binding protein involved in protein trafficking; may modulate vesicle budding and uncoating within the Golgi apparatus. This Oryza sativa subsp. japonica (Rice) protein is ADP-ribosylation factor 1.